Here is a 320-residue protein sequence, read N- to C-terminus: Ubiquinone biosynthesis protein COQ4, mitochondrial (320 aa).

A mitochondrion-targeting transit peptide spans 1-31; it reads MFARSALGRSDQLVTALNSQKRQFVLTAATT. 4 residues coordinate Zn(2+): H205, D206, H209, and E221.

Belongs to the COQ4 family. As to quaternary structure, component of a multi-subunit COQ enzyme complex, composed of at least COQ3, COQ4, COQ5, COQ6, COQ7 and COQ9. It depends on Zn(2+) as a cofactor.

It localises to the mitochondrion inner membrane. It carries out the reaction a 4-hydroxy-3-methoxy-5-(all-trans-polyprenyl)benzoate + H(+) = a 2-methoxy-6-(all-trans-polyprenyl)phenol + CO2. Its pathway is cofactor biosynthesis; ubiquinone biosynthesis. Its function is as follows. Lyase that catalyzes the C1-decarboxylation of 4-hydroxy-3-methoxy-5-(all-trans-polyprenyl)benzoic acid into 2-methoxy-6-(all-trans-polyprenyl)phenol during ubiquinone biosynthesis. The chain is Ubiquinone biosynthesis protein COQ4, mitochondrial from Scheffersomyces stipitis (strain ATCC 58785 / CBS 6054 / NBRC 10063 / NRRL Y-11545) (Yeast).